A 77-amino-acid chain; its full sequence is Small ribosomal subunit protein bS21 (77 aa).

Belongs to the bacterial ribosomal protein bS21 family.

This Methylococcus capsulatus (strain ATCC 33009 / NCIMB 11132 / Bath) protein is Small ribosomal subunit protein bS21.